Here is a 274-residue protein sequence, read N- to C-terminus: Triosephosphate isomerase (274 aa).

31–33 is a binding site for substrate; sequence NWK. His118 serves as the catalytic Electrophile. The Proton acceptor role is filled by Glu188. Residues Gly194, Ser234, and 255–256 each bind substrate; that span reads GG.

It belongs to the triosephosphate isomerase family. Homodimer.

It localises to the cytoplasm. It carries out the reaction D-glyceraldehyde 3-phosphate = dihydroxyacetone phosphate. It functions in the pathway carbohydrate biosynthesis; gluconeogenesis. It participates in carbohydrate degradation; glycolysis; D-glyceraldehyde 3-phosphate from glycerone phosphate: step 1/1. In terms of biological role, involved in the gluconeogenesis. Catalyzes stereospecifically the conversion of dihydroxyacetone phosphate (DHAP) to D-glyceraldehyde-3-phosphate (G3P). This chain is Triosephosphate isomerase, found in Chlamydia trachomatis serovar L2 (strain ATCC VR-902B / DSM 19102 / 434/Bu).